Consider the following 320-residue polypeptide: Lipoyl synthase (320 aa).

Cysteine 67, cysteine 72, cysteine 78, cysteine 93, cysteine 97, cysteine 100, and serine 307 together coordinate [4Fe-4S] cluster. Positions 79-296 constitute a Radical SAM core domain; that stretch reads FNHGTATFMI…RDKANEMGFE (218 aa).

It belongs to the radical SAM superfamily. Lipoyl synthase family. The cofactor is [4Fe-4S] cluster.

Its subcellular location is the cytoplasm. It carries out the reaction [[Fe-S] cluster scaffold protein carrying a second [4Fe-4S](2+) cluster] + N(6)-octanoyl-L-lysyl-[protein] + 2 oxidized [2Fe-2S]-[ferredoxin] + 2 S-adenosyl-L-methionine + 4 H(+) = [[Fe-S] cluster scaffold protein] + N(6)-[(R)-dihydrolipoyl]-L-lysyl-[protein] + 4 Fe(3+) + 2 hydrogen sulfide + 2 5'-deoxyadenosine + 2 L-methionine + 2 reduced [2Fe-2S]-[ferredoxin]. It functions in the pathway protein modification; protein lipoylation via endogenous pathway; protein N(6)-(lipoyl)lysine from octanoyl-[acyl-carrier-protein]: step 2/2. Its function is as follows. Catalyzes the radical-mediated insertion of two sulfur atoms into the C-6 and C-8 positions of the octanoyl moiety bound to the lipoyl domains of lipoate-dependent enzymes, thereby converting the octanoylated domains into lipoylated derivatives. The sequence is that of Lipoyl synthase from Haemophilus influenzae (strain ATCC 51907 / DSM 11121 / KW20 / Rd).